The chain runs to 601 residues: Protein FAM13C (601 aa).

Disordered regions lie at residues 82-134 and 192-238; these read SMGN…PQSS and DGQV…EDLQ. Residues 98-111 show a composition bias toward basic and acidic residues; that stretch reads ESGRNHGESQETEH. S130 carries the post-translational modification Phosphoserine. Over residues 200–217 the composition is skewed to low complexity; the sequence is DPAPASTQSAPADSADPA. Residue S258 is modified to Phosphoserine. Disordered regions lie at residues 268 to 304, 327 to 352, and 366 to 485; these read QRFNLDPESAPSPPSSQQFMMPRSSSRCGSGDGKEPQ, FEQEKKYRPSHGDKTSNPEVLKWMND, and KLSE…DPVS. Over residues 282-294 the composition is skewed to low complexity; it reads SSQQFMMPRSSSR. Residues 327–342 are compositionally biased toward basic and acidic residues; it reads FEQEKKYRPSHGDKTS. S405 and S406 each carry phosphoserine. The span at 415–446 shows a compositional bias: basic and acidic residues; the sequence is VPEKREQTPPQDDGKGTKQDKNLIKPLYDRCR. The span at 462–471 shows a compositional bias: acidic residues; sequence QEEEDSDEDC.

The protein belongs to the FAM13 family.

The sequence is that of Protein FAM13C (Fam13c) from Mus musculus (Mouse).